Reading from the N-terminus, the 524-residue chain is MVKLSNLLVATFGVLLVLNGCLARQSLGVPPQLQNECNLDNLDVLQATETIKSEAGQIEYWDHNHPQLRCVGVSVARYVIEQGGLYLPTFFTSPKISYVVQGTGISGRVVPGCAETFMDSQPMQGQQQGQPWQGRQGQQGQPWEGQGQQGQQGRQGQPWEGQGQQGQQGRQGQQGQPWEGQGQQGQQGFRDMHQKVEHVRRGDVFANTPGSAHWIYNSGEQPLVIIALLDIANYQNQLDRNPRVFHLAGNNQQGGFGGSQQQQEQKNLWSGFDAQVIAQALKIDVQLAQQLQNQQDSRGNIVRVKGPFQVVRPPLRQPYESEEWRHPRSPQGNGLEETICSMRSHENIDDPARADVYKPSLGRVTSVNSYTLPILEYVRLSATRGVLQGNAMVLPKYNMNANEILYCTGGQGRIQVVNDNGQNVLDQQVQKGQLVVIPQGFAYVVQSHGNKFEWISFKTNENAMISTLAGRTSLLRALPLEVISNGFQISPEEARKIKFNTLETTLTRAAGRQQQQLIEEIVEA.

The N-terminal stretch at 1–23 (MVKLSNLLVATFGVLLVLNGCLA) is a signal peptide. Cys37 and Cys70 form a disulfide bridge. 2 Cupin type-1 domains span residues 42–289 (LDVL…QLAQ) and 346–495 (ENID…EEAR). Ser53 is subject to Phosphoserine. Tyr78 is modified (phosphotyrosine). At Ser97 the chain carries Phosphoserine. Cys113 and Cys340 are disulfide-bonded. At Thr116 the chain carries Phosphothreonine. Residues 119–190 (DSQPMQGQQQ…QGQQGQQGFR (72 aa)) are disordered. Residues 124 to 188 (QGQQQGQPWQ…EGQGQQGQQG (65 aa)) are compositionally biased toward low complexity. 2 positions are modified to phosphoserine: Ser259 and Ser366. Position 459 is a phosphothreonine (Thr459). A Phosphoserine modification is found at Ser484. Position 501 is a phosphothreonine (Thr501).

Belongs to the 11S seed storage protein (globulins) family. Hexamer; each subunit is composed of an acidic and a basic chain derived from a single precursor and linked by a disulfide bond. In terms of processing, proteolytically processed during seed maturation at a conserved Asn-Gly peptide bond by an asparaginyl endopeptidase to produce two mature polypeptides referred to as alpha and beta subunits that are joined together by a disulfide bond. Post-translationally, phosphorylated in seeds on some Tyr residues in response to abscisic acid (ABA). Accumulates in seeds 8 days after anthesis.

Its subcellular location is the protein storage vacuole. Functionally, seed storage protein. This Arabidopsis thaliana (Mouse-ear cress) protein is 12S seed storage protein CRC (CRC).